Consider the following 103-residue polypeptide: Small ribosomal subunit protein uS10 (103 aa).

This sequence belongs to the universal ribosomal protein uS10 family. In terms of assembly, part of the 30S ribosomal subunit.

Its function is as follows. Involved in the binding of tRNA to the ribosomes. The sequence is that of Small ribosomal subunit protein uS10 from Xanthomonas axonopodis pv. citri (strain 306).